We begin with the raw amino-acid sequence, 750 residues long: MGNNKSGSEDNHKVWEVNESSKCPFMGGALNKTAGKGTSNRDWWPNQLNLNILRQNSSLINPMDDGFNYAEAFKSLDLNAVKQDIYDLMTNSQDWWPADYGHYGPFFIRMAWHSAGTYRIGDGRGGAGSGQQRFAPLNSWPDNANLDKARLLLWPVKKKYGKNLSWADLLVLAGNCAHESMGLKMFGFAGGREDVWEPAQDVYWGAETEWLNNDERYAGEELENPLGAAHMGLIYVNPEGHNGNPDPVEAASYIRETFGRMAMNDYETVALIAGGHTFGKTHGAADAEEYVEAEPAAAGIESQGLGWKNTFGTGNGADTITSGIEGAWTDTPTKWSNKYFDNLFKYDWECIKGPGGAYQWQPKDNAGAGTVPDAHDPDKKHAPFMLTTDLSLKMDPEYEKISRHFYENPDEFADAYSRAWFKLTHRDMGPIERYLGPEVPKEELLWQDPIPKVDHEIINDSDIASLKNKILNTGLSVQELVTTAWGSASTFRGSDKRGGANGGRIRLAPQNGWEVNNPKQLGKVIDTLEKIQQDFNESQSGSKKVSIADLIVLAGCVGVEKAAKTAGHELKVPFSPGRADASQEQTDVEAFEPLEPNADGFRNYFRNRDHVSASAEELLVDRAQLLTLTVPQMTVLLGGMRAMGANYDGSKKGVFTDRPGQLTNDFFKNILEMGLTWKSSSDSETEFDGSDRKTGDVKWTGSRADLIFGSNSELRAIAEVYGTDDVEAKFVKDFVKAWDKVMNLDRYDLK.

The segment at residues 112-235 (WHSAGTYRIG…LGAAHMGLIY (124 aa)) is a cross-link (tryptophyl-tyrosyl-methioninium (Trp-Tyr) (with M-261)). His113 acts as the Proton acceptor in catalysis. A cross-link (tryptophyl-tyrosyl-methioninium (Tyr-Met) (with W-112)) is located at residues 235 to 261 (YVNPEGHNGNPDPVEAASYIRETFGRM). Residue His276 coordinates heme b.

The protein belongs to the peroxidase family. Peroxidase/catalase subfamily. In terms of assembly, homodimer or homotetramer. Heme b serves as cofactor. Formation of the three residue Trp-Tyr-Met cross-link is important for the catalase, but not the peroxidase activity of the enzyme.

The catalysed reaction is H2O2 + AH2 = A + 2 H2O. It carries out the reaction 2 H2O2 = O2 + 2 H2O. Functionally, bifunctional enzyme with both catalase and broad-spectrum peroxidase activity. In Christiangramia forsetii (strain DSM 17595 / CGMCC 1.15422 / KT0803) (Gramella forsetii), this protein is Catalase-peroxidase.